A 185-amino-acid chain; its full sequence is Putative lipoprotein LprB (185 aa).

The N-terminal stretch at 1-24 is a signal peptide; that stretch reads MRRKVRRLTLAVSALVALFPAVAG. The N-palmitoyl cysteine moiety is linked to residue cysteine 25. Residue cysteine 25 is the site of S-diacylglycerol cysteine attachment. Residues 26-50 are disordered; that stretch reads SDSGDNKPGATIPSTPANAEGRHGP.

The protein localises to the cell membrane. This chain is Putative lipoprotein LprB (lprB), found in Mycobacterium bovis (strain ATCC BAA-935 / AF2122/97).